The following is a 176-amino-acid chain: Cytochrome b (176 aa).

3 helical membrane-spanning segments follow: residues Phe33–Met53, Trp77–Ile98, and Trp113–Leu133. The heme b site is built by His83 and His97.

This sequence belongs to the cytochrome b family. As to quaternary structure, the cytochrome bc1 complex contains 11 subunits: 3 respiratory subunits (MT-CYB, CYC1 and UQCRFS1), 2 core proteins (UQCRC1 and UQCRC2) and 6 low-molecular weight proteins (UQCRH/QCR6, UQCRB/QCR7, UQCRQ/QCR8, UQCR10/QCR9, UQCR11/QCR10 and a cleavage product of UQCRFS1). This cytochrome bc1 complex then forms a dimer. It depends on heme b as a cofactor.

Its subcellular location is the mitochondrion inner membrane. Its function is as follows. Component of the ubiquinol-cytochrome c reductase complex (complex III or cytochrome b-c1 complex) that is part of the mitochondrial respiratory chain. The b-c1 complex mediates electron transfer from ubiquinol to cytochrome c. Contributes to the generation of a proton gradient across the mitochondrial membrane that is then used for ATP synthesis. In Nyctinomops aurispinosus (Peale's free-tailed bat), this protein is Cytochrome b (MT-CYB).